The chain runs to 861 residues: DNA mismatch repair protein MutS (861 aa).

616 to 623 provides a ligand contact to ATP; the sequence is GPNMGGKS.

It belongs to the DNA mismatch repair MutS family.

In terms of biological role, this protein is involved in the repair of mismatches in DNA. It is possible that it carries out the mismatch recognition step. This protein has a weak ATPase activity. The chain is DNA mismatch repair protein MutS from Haemophilus influenzae (strain PittEE).